A 361-amino-acid chain; its full sequence is MSIHTDDFGQGGFAQGGFPPDKAPDKLRMISAAPVSRGEEAMERALRPKLLQEYVGQAKAREQLEIFIGAARKRNEALDHVLLFGPPGLGKTTLSHIIAAELGVNLRQTSGPVLEKPKDLAALLTNLEANDVLFIDEIHRLSPVVEEILYPALEDYQIDIMIGEGPAARSIKLDLQPFTLVGATTRAGMLTNPLRDRFGIVARLEFYTAEELARIVRRSAGLLNAPIDDEGAFEIARRSRGTPRIANRLLRRVRDYADVRGDGSITRELADRALAMLDVDPQGFDIMDRKLLEAVVHRFDGGPVGLDNIAASIGEEAGTIEDVIEPYLIQQGFLQRTPRGRMATQAAYRHLGLPVPGDDAS.

The interval 1-25 (MSIHTDDFGQGGFAQGGFPPDKAPD) is disordered. The tract at residues 5–207 (TDDFGQGGFA…FGIVARLEFY (203 aa)) is large ATPase domain (RuvB-L). ATP-binding positions include L46, R47, G88, K91, T92, T93, 154 to 156 (EDY), R197, Y207, and R244. T92 lines the Mg(2+) pocket. The segment at 208–278 (TAEELARIVR…LADRALAMLD (71 aa)) is small ATPAse domain (RuvB-S). Positions 281–361 (PQGFDIMDRK…GLPVPGDDAS (81 aa)) are head domain (RuvB-H). DNA contacts are provided by R336 and R341.

It belongs to the RuvB family. In terms of assembly, homohexamer. Forms an RuvA(8)-RuvB(12)-Holliday junction (HJ) complex. HJ DNA is sandwiched between 2 RuvA tetramers; dsDNA enters through RuvA and exits via RuvB. An RuvB hexamer assembles on each DNA strand where it exits the tetramer. Each RuvB hexamer is contacted by two RuvA subunits (via domain III) on 2 adjacent RuvB subunits; this complex drives branch migration. In the full resolvosome a probable DNA-RuvA(4)-RuvB(12)-RuvC(2) complex forms which resolves the HJ.

It localises to the cytoplasm. It catalyses the reaction ATP + H2O = ADP + phosphate + H(+). Functionally, the RuvA-RuvB-RuvC complex processes Holliday junction (HJ) DNA during genetic recombination and DNA repair, while the RuvA-RuvB complex plays an important role in the rescue of blocked DNA replication forks via replication fork reversal (RFR). RuvA specifically binds to HJ cruciform DNA, conferring on it an open structure. The RuvB hexamer acts as an ATP-dependent pump, pulling dsDNA into and through the RuvAB complex. RuvB forms 2 homohexamers on either side of HJ DNA bound by 1 or 2 RuvA tetramers; 4 subunits per hexamer contact DNA at a time. Coordinated motions by a converter formed by DNA-disengaged RuvB subunits stimulates ATP hydrolysis and nucleotide exchange. Immobilization of the converter enables RuvB to convert the ATP-contained energy into a lever motion, pulling 2 nucleotides of DNA out of the RuvA tetramer per ATP hydrolyzed, thus driving DNA branch migration. The RuvB motors rotate together with the DNA substrate, which together with the progressing nucleotide cycle form the mechanistic basis for DNA recombination by continuous HJ branch migration. Branch migration allows RuvC to scan DNA until it finds its consensus sequence, where it cleaves and resolves cruciform DNA. The chain is Holliday junction branch migration complex subunit RuvB from Delftia acidovorans (strain DSM 14801 / SPH-1).